The primary structure comprises 427 residues: Mannosylglucosylglycerate synthase (427 aa).

This sequence belongs to the glycosyltransferase group 1 family. Co(2+) is required as a cofactor. Mg(2+) serves as cofactor. The cofactor is Mn(2+). Requires Ni(2+) as cofactor.

It carries out the reaction (2R)-2-O-(alpha-D-glucopyranosyl)-glycerate + GDP-alpha-D-mannose = (2R)-2-O-[alpha-D-mannopyranosyl-(1-&gt;2)-alpha-D-glucopyranosyl]-glycerate + GDP + H(+). Functionally, catalyzes the synthesis of mannosylglucosylglycerate (MGG) from glucosylglycerate (GG) and GDP-mannose. This chain is Mannosylglucosylglycerate synthase, found in Thermotoga maritima (strain ATCC 43589 / DSM 3109 / JCM 10099 / NBRC 100826 / MSB8).